The chain runs to 929 residues: Alanine--tRNA ligase (929 aa).

Zn(2+) contacts are provided by histidine 619, histidine 623, cysteine 722, and histidine 726.

It belongs to the class-II aminoacyl-tRNA synthetase family. Zn(2+) is required as a cofactor.

The protein resides in the cytoplasm. It catalyses the reaction tRNA(Ala) + L-alanine + ATP = L-alanyl-tRNA(Ala) + AMP + diphosphate. Its function is as follows. Catalyzes the attachment of alanine to tRNA(Ala) in a two-step reaction: alanine is first activated by ATP to form Ala-AMP and then transferred to the acceptor end of tRNA(Ala). Also edits incorrectly charged Ser-tRNA(Ala) and Gly-tRNA(Ala) via its editing domain. The chain is Alanine--tRNA ligase from Halobacterium salinarum (strain ATCC 29341 / DSM 671 / R1).